We begin with the raw amino-acid sequence, 164 residues long: Lipoprotein signal peptidase (164 aa).

A run of 3 helical transmembrane segments spans residues 12–32 (WLWLVVVVLIIDLGSKYLILQ), 70–90 (WFFAGIAIGISVILAVMMYRS), and 102–122 (ALIIGGALGNLFDRLWHGFVV). Catalysis depends on residues Asp123 and Asp141. A helical transmembrane segment spans residues 137–157 (FNLADTAICVGAALIVLEGFL).

It belongs to the peptidase A8 family.

It is found in the cell inner membrane. The enzyme catalyses Release of signal peptides from bacterial membrane prolipoproteins. Hydrolyzes -Xaa-Yaa-Zaa-|-(S,diacylglyceryl)Cys-, in which Xaa is hydrophobic (preferably Leu), and Yaa (Ala or Ser) and Zaa (Gly or Ala) have small, neutral side chains.. It participates in protein modification; lipoprotein biosynthesis (signal peptide cleavage). Its function is as follows. This protein specifically catalyzes the removal of signal peptides from prolipoproteins. This is Lipoprotein signal peptidase from Shigella sonnei (strain Ss046).